A 117-amino-acid chain; its full sequence is Large ribosomal subunit protein uL18 (117 aa).

This sequence belongs to the universal ribosomal protein uL18 family. In terms of assembly, part of the 50S ribosomal subunit; part of the 5S rRNA/L5/L18/L25 subcomplex. Contacts the 5S and 23S rRNAs.

This is one of the proteins that bind and probably mediate the attachment of the 5S RNA into the large ribosomal subunit, where it forms part of the central protuberance. This Serratia proteamaculans (strain 568) protein is Large ribosomal subunit protein uL18.